Here is an 88-residue protein sequence, read N- to C-terminus: Large ribosomal subunit protein bL27 (88 aa).

The segment at Met1–Val23 is disordered.

It belongs to the bacterial ribosomal protein bL27 family.

The sequence is that of Large ribosomal subunit protein bL27 from Methylorubrum populi (strain ATCC BAA-705 / NCIMB 13946 / BJ001) (Methylobacterium populi).